The following is a 152-amino-acid chain: D-aminoacyl-tRNA deacylase 1 (152 aa).

The Gly-cisPro motif, important for rejection of L-amino acids signature appears at 140–141 (GP).

It belongs to the DTD family. Homodimer.

It is found in the cytoplasm. It carries out the reaction glycyl-tRNA(Ala) + H2O = tRNA(Ala) + glycine + H(+). The enzyme catalyses a D-aminoacyl-tRNA + H2O = a tRNA + a D-alpha-amino acid + H(+). In terms of biological role, an aminoacyl-tRNA editing enzyme that deacylates mischarged D-aminoacyl-tRNAs. Hydrolyzes correctly charged, achiral, glycyl-tRNA(Gly). Deacylates mischarged D.melanogaster and E.coli glycyl-tRNA(Ala), protecting cells against glycine mischarging by AlaRS. Acts via tRNA-based rather than protein-based catalysis; rejects L-amino acids rather than detecting D-amino acids in the active site. By recycling D-aminoacyl-tRNA to D-amino acids and free tRNA molecules, this enzyme counteracts the toxicity associated with the formation of D-aminoacyl-tRNA entities in vivo and helps enforce protein L-homochirality. This is D-aminoacyl-tRNA deacylase 1 (dtd1) from Leishmania major.